Here is a 174-residue protein sequence, read N- to C-terminus: 3-hydroxyanthranilate 3,4-dioxygenase (174 aa).

Arg47 provides a ligand contact to O2. 3 residues coordinate Fe cation: His51, Glu57, and His95. A substrate-binding site is contributed by Glu57. Positions 99 and 110 each coordinate substrate. Fe cation contacts are provided by Cys125, Cys128, Cys162, and Cys165.

The protein belongs to the 3-HAO family. As to quaternary structure, homodimer. It depends on Fe(2+) as a cofactor.

It carries out the reaction 3-hydroxyanthranilate + O2 = (2Z,4Z)-2-amino-3-carboxymuconate 6-semialdehyde. It functions in the pathway cofactor biosynthesis; NAD(+) biosynthesis; quinolinate from L-kynurenine: step 3/3. Catalyzes the oxidative ring opening of 3-hydroxyanthranilate to 2-amino-3-carboxymuconate semialdehyde, which spontaneously cyclizes to quinolinate. The chain is 3-hydroxyanthranilate 3,4-dioxygenase from Paraburkholderia phytofirmans (strain DSM 17436 / LMG 22146 / PsJN) (Burkholderia phytofirmans).